A 406-amino-acid chain; its full sequence is Putative ankyrin repeat protein RF_0266 (406 aa).

5 ANK repeats span residues 68-98, 103-129, 130-161, 163-189, and 203-232; these read TSHS…DINN, NYIT…QDDI, KVQN…IIKP, HIEL…DIEK, and SIDC…KPEQ.

This Rickettsia felis (strain ATCC VR-1525 / URRWXCal2) (Rickettsia azadi) protein is Putative ankyrin repeat protein RF_0266.